A 1071-amino-acid chain; its full sequence is Carbamoyl phosphate synthase large chain (1071 aa).

Positions 1–403 (MPKRTDLKSI…SFQKALRGLE (403 aa)) are carboxyphosphate synthetic domain. The 196-residue stretch at 133-328 (KEAMEKIGLS…IAKVAANWAV (196 aa)) folds into the ATP-grasp 1 domain. The ATP site is built by R169, G175, G176, Q208, V210, E215, G241, V242, H243, Q285, and E299. 3 residues coordinate Mg(2+): Q285, E299, and N301. Mn(2+) contacts are provided by Q285, E299, and N301. The segment at 404–548 (TGLCGFNPAR…YSTYEEECES (145 aa)) is oligomerization domain. Positions 549-930 (RPSDRKKVMI…AYYKAQLGAG (382 aa)) are carbamoyl phosphate synthetic domain. An ATP-grasp 2 domain is found at 673–864 (QKVLNDLGLR…LAKVGARCMA (192 aa)). Residues R709, F748, L750, E755, G780, I781, H782, S783, Q823, and E835 each contribute to the ATP site. Residues Q823, E835, and N837 each contribute to the Mg(2+) site. Mn(2+) contacts are provided by Q823, E835, and N837. One can recognise an MGS-like domain in the interval 931 to 1071 (ERLNPTGKIF…ELHGRLKNRN (141 aa)). The segment at 931 to 1071 (ERLNPTGKIF…ELHGRLKNRN (141 aa)) is allosteric domain.

It belongs to the CarB family. Composed of two chains; the small (or glutamine) chain promotes the hydrolysis of glutamine to ammonia, which is used by the large (or ammonia) chain to synthesize carbamoyl phosphate. Tetramer of heterodimers (alpha,beta)4. The cofactor is Mg(2+). Requires Mn(2+) as cofactor.

It carries out the reaction hydrogencarbonate + L-glutamine + 2 ATP + H2O = carbamoyl phosphate + L-glutamate + 2 ADP + phosphate + 2 H(+). The enzyme catalyses hydrogencarbonate + NH4(+) + 2 ATP = carbamoyl phosphate + 2 ADP + phosphate + 2 H(+). The protein operates within amino-acid biosynthesis; L-arginine biosynthesis; carbamoyl phosphate from bicarbonate: step 1/1. It participates in pyrimidine metabolism; UMP biosynthesis via de novo pathway; (S)-dihydroorotate from bicarbonate: step 1/3. In terms of biological role, large subunit of the glutamine-dependent carbamoyl phosphate synthetase (CPSase). CPSase catalyzes the formation of carbamoyl phosphate from the ammonia moiety of glutamine, carbonate, and phosphate donated by ATP, constituting the first step of 2 biosynthetic pathways, one leading to arginine and/or urea and the other to pyrimidine nucleotides. The large subunit (synthetase) binds the substrates ammonia (free or transferred from glutamine from the small subunit), hydrogencarbonate and ATP and carries out an ATP-coupled ligase reaction, activating hydrogencarbonate by forming carboxy phosphate which reacts with ammonia to form carbamoyl phosphate. The protein is Carbamoyl phosphate synthase large chain of Neisseria gonorrhoeae.